Here is a 191-residue protein sequence, read N- to C-terminus: Protein Ves (191 aa).

This sequence belongs to the Ves family.

The chain is Protein Ves from Escherichia coli (strain UTI89 / UPEC).